The following is a 757-amino-acid chain: MRDMRASSPETTSAVKCPFNKTAVEGTHNKDWWPNQLRVDLLHQHSNKSNPLGETFDYAKEFQKLDYAALKRDLHALMTDSQDWWPADFGHYGGLFIRMAWHSAGTYRIGDGRGGAGRGQQRFAPLNSWPDNVSLDKARRLLWPIKKKYGQQISWADLIVLAGNVALESMGFKTFGFAGGRVDTWEPDQDVYWGREMTWLGGDVRYGAVSEGVHHPDEHRGAKEKASKNSDSRVLENPLAAVQMGLIYVNPEGPDGCPDPLASARDIRETFARMAMNDEETVALIAGGHTFGKTHGAAPADNVGPEPEAGELEQQGLGWHNRFGSGKAGDTITSGLEVTWTKTPTQWSNDFFEHLFGYEWELTKSPAGAYQWVAKDAAATIPHAHDPSKKLLPMMLTSDLALRFDPVYEKISRHFHAHPDQFADAFARAWFKLTHRDMGPRVRYLGPEVPAEELIWQDPVPKVSHVLVDAQDLLALKHKISASGLGISQLVSTAWASASTFRGSDKRGGANGGRLCLAPQSQWEVNQPQQLSVVLETLRRVQAEFNAQAGDKRISLADLIVLAGGVGVEQAAKRAGIVLEVPFVPGRTDALQEQTDVSSFAPLEPFADGFRNYVKEGCVVPSEHLLIDRAQLLTLTAPEMTVLIGGLRVLGANVGGVKHGVFTDRLGTLSNDFFINLLDMGTEWAPVSKERHLFEGRDRRTGALKWTGTRVDLVFGSNSLLRALAEVYAAVDAQEKFVRDFVAAWSKVMHLDRFDLV.

The tryptophyl-tyrosyl-methioninium (Trp-Tyr) (with M-274) cross-link spans 101–248 (WHSAGTYRIG…LAAVQMGLIY (148 aa)). Histidine 102 acts as the Proton acceptor in catalysis. The segment at 213-232 (VHHPDEHRGAKEKASKNSDS) is disordered. The segment at residues 248–274 (YVNPEGPDGCPDPLASARDIRETFARM) is a cross-link (tryptophyl-tyrosyl-methioninium (Tyr-Met) (with W-101)). Histidine 289 is a binding site for heme b.

It belongs to the peroxidase family. Peroxidase/catalase subfamily. As to quaternary structure, homodimer or homotetramer. Heme b serves as cofactor. Formation of the three residue Trp-Tyr-Met cross-link is important for the catalase, but not the peroxidase activity of the enzyme.

It carries out the reaction H2O2 + AH2 = A + 2 H2O. The enzyme catalyses 2 H2O2 = O2 + 2 H2O. Its function is as follows. Bifunctional enzyme with both catalase and broad-spectrum peroxidase activity. The chain is Catalase-peroxidase from Xylella fastidiosa (strain M23).